We begin with the raw amino-acid sequence, 793 residues long: Acetyl-CoA decarbonylase/synthase complex subunit alpha (793 aa).

[4Fe-4S] cluster-binding residues include C55, C58, C63, and C73. Residue H96 coordinates CO. Positions 229, 257, and 309 each coordinate [Ni-4Fe-4S] cluster. 2 consecutive 4Fe-4S ferredoxin-type domains span residues E393–M422 and E432–Y461. [4Fe-4S] cluster contacts are provided by C403, C406, C409, C413, C441, C444, C447, and C451. [Ni-4Fe-4S] cluster-binding residues include C509, C538, and C573.

The protein belongs to the Ni-containing carbon monoxide dehydrogenase family. As to quaternary structure, heterotetramer of two alpha and two epsilon subunits. The ACDS complex is made up of alpha, epsilon, beta, gamma and delta subunits with a probable stoichiometry of (alpha(2)epsilon(2))(4)-beta(8)-(gamma(1)delta(1))(8). It depends on [4Fe-4S] cluster as a cofactor. [Ni-4Fe-4S] cluster serves as cofactor.

The enzyme catalyses CO + 2 oxidized [2Fe-2S]-[ferredoxin] + H2O = 2 reduced [2Fe-2S]-[ferredoxin] + CO2 + 2 H(+). Part of the ACDS complex that catalyzes the reversible cleavage of acetyl-CoA, allowing autotrophic growth from CO(2). The alpha-epsilon subcomponent functions as a carbon monoxide dehydrogenase. The sequence is that of Acetyl-CoA decarbonylase/synthase complex subunit alpha from Methanothrix soehngenii (Methanosaeta concilii).